A 447-amino-acid chain; its full sequence is Phosphoglucosamine mutase (447 aa).

The Phosphoserine intermediate role is filled by S104. Residues S104, D243, D245, and D247 each coordinate Mg(2+). Phosphoserine is present on S104.

This sequence belongs to the phosphohexose mutase family. The cofactor is Mg(2+). In terms of processing, activated by phosphorylation.

The catalysed reaction is alpha-D-glucosamine 1-phosphate = D-glucosamine 6-phosphate. Functionally, catalyzes the conversion of glucosamine-6-phosphate to glucosamine-1-phosphate. The sequence is that of Phosphoglucosamine mutase from Corynebacterium aurimucosum (strain ATCC 700975 / DSM 44827 / CIP 107346 / CN-1) (Corynebacterium nigricans).